Reading from the N-terminus, the 336-residue chain is Succinylglutamate desuccinylase (336 aa).

Zn(2+) contacts are provided by His-59, Glu-62, and His-151. Residue Glu-215 is part of the active site.

Belongs to the AspA/AstE family. Succinylglutamate desuccinylase subfamily. Zn(2+) is required as a cofactor.

It catalyses the reaction N-succinyl-L-glutamate + H2O = L-glutamate + succinate. It functions in the pathway amino-acid degradation; L-arginine degradation via AST pathway; L-glutamate and succinate from L-arginine: step 5/5. Transforms N(2)-succinylglutamate into succinate and glutamate. The polypeptide is Succinylglutamate desuccinylase (Pseudomonas fluorescens (strain Pf0-1)).